We begin with the raw amino-acid sequence, 575 residues long: Septation ring formation regulator EzrA (575 aa).

The Extracellular segment spans residues 1–8; it reads MSNGQLIY. A helical membrane pass occupies residues 9 to 27; sequence LMVAIAVILVLAYVVAIFL. Residues 28–575 lie on the Cytoplasmic side of the membrane; the sequence is RKRNEGRLEA…YEKTRETIRF (548 aa). Coiled-coil stretches lie at residues 105–191, 265–301, 354–416, and 456–526; these read LKAS…FVTL, LYEA…LYDI, VRRI…IEKD, and TASN…IQEA.

This sequence belongs to the EzrA family.

Its subcellular location is the cell membrane. Functionally, negative regulator of FtsZ ring formation; modulates the frequency and position of FtsZ ring formation. Inhibits FtsZ ring formation at polar sites. Interacts either with FtsZ or with one of its binding partners to promote depolymerization. This Streptococcus pneumoniae (strain ATCC BAA-255 / R6) protein is Septation ring formation regulator EzrA.